We begin with the raw amino-acid sequence, 359 residues long: 4-galactosyl-N-acetylglucosaminide 3-alpha-L-fucosyltransferase 9 (359 aa).

Residues 1–11 (MTSASKGILRP) lie on the Cytoplasmic side of the membrane. A helical; Signal-anchor for type II membrane protein transmembrane segment spans residues 12 to 32 (FLIVCIILGCFMACLLIYIKP). At 33 to 359 (TNSWIFSPME…VGNLEKWFWN (327 aa)) the chain is on the lumenal side. An N-linked (GlcNAc...) asparagine glycan is attached at asparagine 62. The tract at residues 63 to 168 (ETTILIWVWP…RRDSDIQVPY (106 aa)) is acceptor-binding. Residue glutamine 75 coordinates a beta-D-galactosyl-(1-&gt;4)-N-acetyl-beta-D-glucosaminyl derivative. 3 disulfide bridges follow: cysteine 82/cysteine 335, cysteine 91/cysteine 338, and cysteine 190/cysteine 238. Residue asparagine 101 is glycosylated (N-linked (GlcNAc...) asparagine). An a beta-D-galactosyl-(1-&gt;4)-N-acetyl-beta-D-glucosaminyl derivative-binding site is contributed by glutamate 137. The active-site Nucleophile is glutamate 137. Glutamate 137 contributes to the GDP-beta-L-fucose binding site. A glycan (N-linked (GlcNAc...) asparagine) is linked at asparagine 153. GDP-beta-L-fucose contacts are provided by tyrosine 168, valine 192, serine 194, asparagine 195, arginine 202, valine 226, tyrosine 241, asparagine 246, tyrosine 252, glutamate 255, and lysine 256. The donor-binding stretch occupies residues 169–326 (GFLTVSTNPF…NWRKDFTVNL (158 aa)). An acceptor-binding region spans residues 327–359 (PRFWESHACLACDHVKRHQEYKSVGNLEKWFWN).

It belongs to the glycosyltransferase 10 family. Homodimer. In terms of processing, N-glycosylated with complex-type N-glycans.

It is found in the golgi apparatus. The protein localises to the trans-Golgi network membrane. It localises to the golgi apparatus membrane. The catalysed reaction is a beta-D-galactosyl-(1-&gt;4)-N-acetyl-beta-D-glucosaminyl derivative + GDP-beta-L-fucose = a beta-D-galactosyl-(1-&gt;4)-[alpha-L-fucosyl-(1-&gt;3)]-N-acetyl-beta-D-glucosaminyl derivative + GDP + H(+). The enzyme catalyses an alpha-Neu5Ac-(2-&gt;3)-beta-D-Gal-(1-&gt;4)-beta-D-GlcNAc-(1-&gt;3)-beta-D-Gal-(1-&gt;4)-beta-D-GlcNAc derivative + GDP-beta-L-fucose = an alpha-Neu5Ac-(2-&gt;3)-beta-D-Gal-(1-&gt;4)-beta-D-GlcNAc-(1-&gt;3)-beta-D-Gal-(1-&gt;4)-[alpha-L-Fuc-(1-&gt;3)]-beta-D-GlcNAc derivative + GDP + H(+). It carries out the reaction alpha-N-glycoloylneuraminosyl-(2-&gt;3)-beta-D-galactosyl-(1-&gt;4)-N-acetyl-beta-D-glucosaminyl-(1-&gt;3)-beta-D-galactosyl-(1-&gt;4)-N-acetyl-beta-D-glucosaminyl-(1-&gt;3)-beta-D-galactosyl-(1-&gt;4)-beta-D-glucosyl-(1&lt;-&gt;1')-ceramide + GDP-beta-L-fucose = alpha-N-glycoloylneuraminosyl-(2-&gt;3)-beta-D-galactosyl-(1-&gt;4)-N-acetyl-beta-D-glucosaminyl-(1-&gt;3)-beta-D-galactosyl-(1-&gt;4)-[alpha-L-fucosyl-(1-&gt;3)]-N-acetyl-beta-D-glucosaminyl-(1-&gt;3)-beta-D-galactosyl-(1-&gt;4)-beta-D-glucosyl-(1&lt;-&gt;1')-ceramide + GDP + H(+). It catalyses the reaction alpha-D-galactosyl-(1-&gt;3)-beta-D-galactosyl-(1-&gt;4)-N-acetyl-beta-D-glucosaminyl-(1-&gt;3)-beta-D-galactosyl-(1-&gt;4)-beta-D-glucosyl-(1&lt;-&gt;1')-ceramide + GDP-beta-L-fucose = a neolactoside IV(3)-alpha-Gal,III(3)-alpha-Fuc-nLc4Cer + GDP + H(+). The catalysed reaction is a neolactoside nLc4Cer + GDP-beta-L-fucose = a neolactoside III(3)-alpha-Fuc-nLc4Cer + GDP + H(+). The enzyme catalyses an N-acetyl-alpha-neuraminyl-(2-&gt;3)-beta-D-galactosyl-(1-&gt;4)-N-acetyl-beta-D-glucosaminyl derivative + GDP-beta-L-fucose = an alpha-Neu5Ac-(2-&gt;3)-beta-D-Gal-(1-&gt;4)-[alpha-L-Fuc-(1-&gt;3)]-beta-D-GlcNAc derivative + GDP + H(+). It carries out the reaction beta-D-Gal-(1-&gt;4)-beta-D-GlcNAc-(1-&gt;3)-beta-D-Gal-(1-&gt;4)-D-Glc + GDP-beta-L-fucose = beta-D-Gal-(1-&gt;4)-[alpha-L-Fuc-(1-&gt;3)]-beta-D-GlcNAc-(1-&gt;3)-beta-D-Gal-(1-&gt;4)-D-Glc + GDP + H(+). It catalyses the reaction an alpha-L-Fuc-(1-&gt;2)-beta-D-Gal-(1-&gt;4)-beta-D-GlcNAc derivative + GDP-beta-L-fucose = an alpha-L-Fuc-(1-&gt;2)-beta-D-Gal-(1-&gt;4)-[alpha-L-Fuc-(1-&gt;3)]-beta-D-GlcNAc derivative + GDP + H(+). Its pathway is protein modification; protein glycosylation. It functions in the pathway glycolipid biosynthesis. Its activity is regulated as follows. Activated by Mn2+. Functionally, catalyzes alpha(1-&gt;3) linkage of fucosyl moiety transferred from GDP-beta-L-fucose to N-acetyl glucosamine (GlcNAc) within type 2 lactosamine (LacNAc, beta-D-Gal-(1-&gt;4)-beta-D-GlcNAc-) glycan attached to glycolipids and N- or O-linked glycoproteins. Fucosylates distal type 2 LacNAc and its fucosylated (H-type 2 LacNAc) and sialylated (sialyl-type 2 LacNAc) derivatives to form Lewis x (Lex) (CD15) and Lewis y (Ley) antigenic epitopes involved in cell adhesion and differentiation. Generates Lex epitopes in the brain, presumably playing a role in the maintenance of neuronal stemness and neurite outgrowth in progenitor neural cells. Fucosylates the internal type 2 LacNAc unit of the polylactosamine chain to form VIM-2 antigen that serves as recognition epitope for SELE. Can also modify milk oligosaccharides in particular type 2 tetrasaccharide LNnT. This is 4-galactosyl-N-acetylglucosaminide 3-alpha-L-fucosyltransferase 9 from Canis lupus familiaris (Dog).